Reading from the N-terminus, the 338-residue chain is Lipoate-protein ligase A (338 aa).

The 188-residue stretch at 29–216 folds into the BPL/LPL catalytic domain; the sequence is PATQRVLFLW…AFFAHYGERV (188 aa). ATP-binding positions include Arg71, 76–79, and Lys134; that span reads GAVF. Lys134 contacts (R)-lipoate.

The protein belongs to the LplA family. In terms of assembly, monomer.

The protein resides in the cytoplasm. The catalysed reaction is L-lysyl-[lipoyl-carrier protein] + (R)-lipoate + ATP = N(6)-[(R)-lipoyl]-L-lysyl-[lipoyl-carrier protein] + AMP + diphosphate + H(+). It participates in protein modification; protein lipoylation via exogenous pathway; protein N(6)-(lipoyl)lysine from lipoate: step 1/2. The protein operates within protein modification; protein lipoylation via exogenous pathway; protein N(6)-(lipoyl)lysine from lipoate: step 2/2. Functionally, catalyzes both the ATP-dependent activation of exogenously supplied lipoate to lipoyl-AMP and the transfer of the activated lipoyl onto the lipoyl domains of lipoate-dependent enzymes. The chain is Lipoate-protein ligase A from Salmonella dublin (strain CT_02021853).